Reading from the N-terminus, the 211-residue chain is Tudor-interacting repair regulator protein (211 aa).

Glycyl lysine isopeptide (Lys-Gly) (interchain with G-Cter in ubiquitin) cross-links involve residues K10 and K151. Residues 118-205 (TLEQLHAVEI…TEKQKKALEK (88 aa)) form an interaction with PXN region.

Belongs to the Nudix hydrolase family. TIRR subfamily. Homodimer. Interacts with TP53BP1 (via the Tudor-like domain); interaction is abolished following DNA damage and TP53BP1 phosphorylation by ATM. Interacts (via the cytoplasmic part) with SDC4. Interacts with TGFB1I1 and PXN.

It is found in the nucleus. Functionally, key regulator of TP53BP1 required to stabilize TP53BP1 and regulate its recruitment to chromatin. In absence of DNA damage, interacts with the tandem Tudor-like domain of TP53BP1, masking the region that binds histone H4 dimethylated at 'Lys-20' (H4K20me2), thereby preventing TP53BP1 recruitment to chromatin and maintaining TP53BP1 localization to the nucleus. Following DNA damage, ATM-induced phosphorylation of TP53BP1 and subsequent recruitment of RIF1 leads to dissociate NUDT16L1/TIRR from TP53BP1, unmasking the tandem Tudor-like domain and allowing recruitment of TP53BP1 to DNA double strand breaks (DSBs). Binds U8 snoRNA. This is Tudor-interacting repair regulator protein from Homo sapiens (Human).